Here is a 207-residue protein sequence, read N- to C-terminus: MARYIGPKCKLSRREGTDLFLKSARRSLDSKCKLDSKPGQHGRTSGARTSDYGLQLREKQKLKRMYGVLEKQFRKYFVEAERRRGNTGETLIQLLESRLDNVVYRMGFGSTRAEARQLVSHRAIELNGHTADIASMLVKAGDVISIREKAKKQGRIRESLDLAASIGLPQWVEVDASKMTGTFKSAPDRADVARDVNESMVVELYSR.

A disordered region spans residues 31 to 51 (KCKLDSKPGQHGRTSGARTSD). Residues 97–162 (SRLDNVVYRM…QGRIRESLDL (66 aa)) form the S4 RNA-binding domain.

Belongs to the universal ribosomal protein uS4 family. Part of the 30S ribosomal subunit. Contacts protein S5. The interaction surface between S4 and S5 is involved in control of translational fidelity.

Functionally, one of the primary rRNA binding proteins, it binds directly to 16S rRNA where it nucleates assembly of the body of the 30S subunit. Its function is as follows. With S5 and S12 plays an important role in translational accuracy. The polypeptide is Small ribosomal subunit protein uS4 (Bordetella bronchiseptica (strain ATCC BAA-588 / NCTC 13252 / RB50) (Alcaligenes bronchisepticus)).